The chain runs to 366 residues: PTI1-like tyrosine-protein kinase 2 (366 aa).

Residues 8–23 (GDKKGDSDLSNEEVHL) are compositionally biased toward basic and acidic residues. The tract at residues 8-50 (GDKKGDSDLSNEEVHLKSPWQNSEANQKNQKPQAVVKPEAQKE) is disordered. Residues 26-39 (PWQNSEANQKNQKP) are compositionally biased toward polar residues. A Protein kinase domain is found at 71-353 (FGSKSLIGEG…IVVKALQPLL (283 aa)). ATP-binding positions include 77 to 85 (IGEGSYGRV) and Lys99. Asp203 serves as the catalytic Proton acceptor.

It belongs to the protein kinase superfamily. Tyr protein kinase family. As to quaternary structure, interacts with OXI1. Post-translationally, autophosphorylated and phosphorylated by OXI1.

The enzyme catalyses L-tyrosyl-[protein] + ATP = O-phospho-L-tyrosyl-[protein] + ADP + H(+). With respect to regulation, strongly activated in response to phosphatidic acid (PA) and xylanase in a OXI1- and PDK1-dependent manner, and, to a lesser extent, by hydrogen peroxide and flagellin in a OXI1-dependent manner. In terms of biological role, probable tyrosine-protein kinase involved in oxidative burst-mediated signaling leading to specific genes expression. The polypeptide is PTI1-like tyrosine-protein kinase 2 (PTI12) (Arabidopsis thaliana (Mouse-ear cress)).